We begin with the raw amino-acid sequence, 255 residues long: Adenylate dimethylallyltransferase (255 aa).

The protein belongs to the isopentenyl transferase family.

The enzyme catalyses dimethylallyl diphosphate + AMP = N(6)-(dimethylallyl)adenosine 5'-phosphate + diphosphate. Transfers dimethylallyl groups to AMP as part of the biosynthesis of cytokinin phytohormones. This is Adenylate dimethylallyltransferase (fas4) from Rhodococcoides fascians (Rhodococcus fascians).